The following is a 327-amino-acid chain: Methionyl-tRNA formyltransferase (327 aa).

Residue 121–124 (SLLP) coordinates (6S)-5,6,7,8-tetrahydrofolate.

It belongs to the Fmt family.

It carries out the reaction L-methionyl-tRNA(fMet) + (6R)-10-formyltetrahydrofolate = N-formyl-L-methionyl-tRNA(fMet) + (6S)-5,6,7,8-tetrahydrofolate + H(+). Its function is as follows. Attaches a formyl group to the free amino group of methionyl-tRNA(fMet). The formyl group appears to play a dual role in the initiator identity of N-formylmethionyl-tRNA by promoting its recognition by IF2 and preventing the misappropriation of this tRNA by the elongation apparatus. This chain is Methionyl-tRNA formyltransferase, found in Burkholderia pseudomallei (strain 1106a).